A 212-amino-acid polypeptide reads, in one-letter code: MFITFEGGEGCGKTTQLTLLGDWLEKRCHRVVRTREPGGTALGRSLRGLLLDARSEITPTAELLLYATDRAEHLARVVRPALASGAAVLCDRFSDSTVAYQGYGRGLDLGLIERLNAIATGGLLPDLTFWLKLDPQAGLVRRLASNGNTPDRIEAETLAFHQRVHMGFAALANRYPGRIRPVDAGLSVEATAEQIRSAVDVFLNENQSKLEK.

7-14 contacts ATP; that stretch reads GGEGCGKT.

Belongs to the thymidylate kinase family.

The enzyme catalyses dTMP + ATP = dTDP + ADP. Functionally, phosphorylation of dTMP to form dTDP in both de novo and salvage pathways of dTTP synthesis. This chain is Thymidylate kinase, found in Gloeobacter violaceus (strain ATCC 29082 / PCC 7421).